A 206-amino-acid chain; its full sequence is Pyridoxine/pyridoxamine 5'-phosphate oxidase (206 aa).

FMN-binding positions include 53–58 (RMVLLK), 68–69 (YT), Lys75, and Gln97. Lys58 provides a ligand contact to substrate. 3 residues coordinate substrate: Tyr115, Arg119, and Ser123. FMN contacts are provided by residues 132–133 (QS) and Trp177. 183–185 (RLH) contacts substrate. Arg187 lines the FMN pocket.

The protein belongs to the pyridoxamine 5'-phosphate oxidase family. As to quaternary structure, homodimer. The cofactor is FMN.

It catalyses the reaction pyridoxamine 5'-phosphate + O2 + H2O = pyridoxal 5'-phosphate + H2O2 + NH4(+). The enzyme catalyses pyridoxine 5'-phosphate + O2 = pyridoxal 5'-phosphate + H2O2. It functions in the pathway cofactor metabolism; pyridoxal 5'-phosphate salvage; pyridoxal 5'-phosphate from pyridoxamine 5'-phosphate: step 1/1. Its pathway is cofactor metabolism; pyridoxal 5'-phosphate salvage; pyridoxal 5'-phosphate from pyridoxine 5'-phosphate: step 1/1. Catalyzes the oxidation of either pyridoxine 5'-phosphate (PNP) or pyridoxamine 5'-phosphate (PMP) into pyridoxal 5'-phosphate (PLP). This chain is Pyridoxine/pyridoxamine 5'-phosphate oxidase, found in Rhizobium leguminosarum bv. trifolii (strain WSM2304).